A 437-amino-acid chain; its full sequence is Protein arginine methyltransferase NDUFAF7 homolog, mitochondrial (437 aa).

The segment at 21 to 49 is disordered; the sequence is RPNLGATGTPKMEPPKEQPEASSKAESGH.

It belongs to the NDUFAF7 family.

It is found in the mitochondrion. The catalysed reaction is L-arginyl-[protein] + 2 S-adenosyl-L-methionine = N(omega),N(omega)'-dimethyl-L-arginyl-[protein] + 2 S-adenosyl-L-homocysteine + 2 H(+). Functionally, arginine methyltransferase involved in the assembly or stability of mitochondrial NADH:ubiquinone oxidoreductase complex (complex I). The chain is Protein arginine methyltransferase NDUFAF7 homolog, mitochondrial from Drosophila melanogaster (Fruit fly).